A 511-amino-acid polypeptide reads, in one-letter code: Myrosinase 5 (511 aa).

An N-terminal signal peptide occupies residues 1 to 23; that stretch reads MAIPKAHYSLAVLVLLFVVVSSS. 3 cysteine pairs are disulfide-bonded: cysteine 31–cysteine 450, cysteine 39–cysteine 445, and cysteine 230–cysteine 233. N-linked (GlcNAc...) asparagine glycosylation is found at asparagine 46 and asparagine 53. A beta-D-glucoside is bound by residues glutamine 64, histidine 165, and 210 to 211; that span reads NQ. Residue asparagine 222 is glycosylated (N-linked (GlcNAc...) asparagine). A beta-D-glucoside contacts are provided by tyrosine 351 and glutamate 418. The active-site Nucleophile is the glutamate 418. Residue asparagine 428 is glycosylated (N-linked (GlcNAc...) asparagine). A beta-D-glucoside contacts are provided by residues tryptophan 467, 474-475, and phenylalanine 483; that span reads EF. The N-linked (GlcNAc...) asparagine glycan is linked to asparagine 489.

It belongs to the glycosyl hydrolase 1 family. In terms of tissue distribution, specifically expressed in roots.

The enzyme catalyses a thioglucoside + H2O = a sugar + a thiol.. The catalysed reaction is Hydrolysis of terminal, non-reducing beta-D-glucosyl residues with release of beta-D-glucose.. Its function is as follows. Hydrolyzes sinigrin and, with lower efficiency, p-nitrophenyl beta-D-glucoside. The sequence is that of Myrosinase 5 from Arabidopsis thaliana (Mouse-ear cress).